The following is a 92-amino-acid chain: Small integral membrane protein 12 (92 aa).

Residues 15–34 (YVTFPVAFVVGAVGYHLEWF) traverse the membrane as a helical segment.

Belongs to the SMIM12 family.

The protein localises to the membrane. This Nomascus leucogenys (Northern white-cheeked gibbon) protein is Small integral membrane protein 12 (SMIM12).